A 675-amino-acid chain; its full sequence is Vacuolar protein sorting-associated protein 5 (675 aa).

3 disordered regions span residues 1 to 26 (MDYE…QSLV), 65 to 84 (EWKD…EHDN), and 165 to 219 (RAQR…RREN). Basic residues predominate over residues 168-180 (RNSKRNHSLKAKR). A compositionally biased stretch (basic and acidic residues) spans 195-204 (PLKKAEKENE). The PX domain maps to 279 to 394 (VAFKVEVKDP…LFLTSDDFSS (116 aa)). R320, K346, and R360 together coordinate a 1,2-diacyl-sn-glycero-3-phospho-(1D-myo-inositol-3-phosphate).

This sequence belongs to the sorting nexin family. As to quaternary structure, component of the retromer complex which consists of VPS29, VPS26, VPS35, VPS5 and VPS17. Component of a retromer subcomplex consisting of VPSD5 and VPS17. Post-translationally, phosphorylated on serine residue(s).

The protein resides in the cytoplasm. The protein localises to the golgi apparatus membrane. It is found in the endosome membrane. Its function is as follows. Plays a role in vesicular protein sorting. Required for retention of late Golgi membrane proteins and vacuolar biogenesis. Component of the membrane-associated retromer complex which is essential in endosome-to-Golgi retrograde transport. The VPS5-VPS17 subcomplex may assemble onto the membrane to promote vesicle formation. The chain is Vacuolar protein sorting-associated protein 5 (VPS5) from Saccharomyces cerevisiae (strain ATCC 204508 / S288c) (Baker's yeast).